The chain runs to 426 residues: 6-Hydroxy-7-prenyldeoxybrevianamide E synthase notC (426 aa).

Glu94 contributes to the substrate binding site. Residues Arg105, Lys191, and Tyr193 each coordinate dimethylallyl diphosphate. Tyr195 provides a ligand contact to substrate. Residues Lys267, Tyr269, Gln352, Tyr354, Tyr418, and Tyr422 each contribute to the dimethylallyl diphosphate site.

Belongs to the tryptophan dimethylallyltransferase family.

The catalysed reaction is 6-hydroxydeoxybrevianamide E + dimethylallyl diphosphate = notoamide S + diphosphate. Its pathway is alkaloid biosynthesis. Its activity is regulated as follows. Addition of 5 mM Mg(2+), Ca(2+) or Mn(2+) slightly enhances catalysis (about 100-120%). Significant reduction of enzyme activity (2%-35%) is observed with Cu(2+), Zn(2+), Fe(2+), or Sn(2+) (5 mM). In terms of biological role, prenyltransferase; part of the gene cluster that mediates the biosynthesis of notoamide, a fungal indole alkaloid that belongs to a family of natural products containing a characteristic bicyclo[2.2.2]diazaoctane core. The first step of notoamide biosynthesis involves coupling of L-proline and L-tryptophan by the bimodular NRPS notE, to produce cyclo-L-tryptophan-L-proline called brevianamide F. The reverse prenyltransferase notF then acts as a deoxybrevianamide E synthase and converts brevianamide F to deoxybrevianamide E via reverse prenylation at C-2 of the indole ring leading to the bicyclo[2.2.2]diazaoctane core. Deoxybrevianamide E is further hydroxylated at C-6 of the indole ring, likely catalyzed by the cytochrome P450 monooxygenase notG, to yield 6-hydroxy-deoxybrevianamide E. 6-hydroxy-deoxybrevianamide E is a specific substrate of the prenyltransferase notC for normal prenylation at C-7 to produce 6-hydroxy-7-prenyl-deoxybrevianamide, also called notoamide S. As the proposed pivotal branching point in notoamide biosynthesis, notoamide S can be diverted to notoamide E through an oxidative pyran ring closure putatively catalyzed by either notH cytochrome P450 monooxygenase or the notD FAD-linked oxidoreductase. This step would be followed by an indole 2,3-epoxidation-initiated pinacol-like rearrangement catalyzed by the notB FAD-dependent monooxygenase leading to the formation of notoamide C and notoamide D. On the other hand notoamide S is converted to notoamide T by notH (or notD), a bifunctional oxidase that also functions as the intramolecular Diels-Alderase responsible for generation of (+)-notoamide T. To generate antipodal (-)-notoaminide T, notH' (or notD') in Aspergillus versicolor is expected to catalyze a Diels-Alder reaction leading to the opposite stereochemistry. The remaining oxidoreductase notD (or notH) likely catalyzes the oxidative pyran ring formation to yield (+)-stephacidin A. The FAD-dependent monooxygenase notI is highly similar to notB and is predicted to catalyze a similar conversion from (+)-stephacidin A to (-)-notoamide B via the 2,3-epoxidation of (+)-stephacidin A followed by a pinacol-type rearrangement. Finally, it remains unclear which enzyme could be responsible for the final hydroxylation steps leading to notoamide A and sclerotiamide. In Aspergillus sp. (strain MF297-2), this protein is 6-Hydroxy-7-prenyldeoxybrevianamide E synthase notC.